Here is an 85-residue protein sequence, read N- to C-terminus: Dr hemagglutinin AFA-III operon regulatory protein AfaF (85 aa).

The protein to E.coli PapI and DaaF.

Its function is as follows. May have a possible regulatory function on the expression of the other AFA-III genes. In Escherichia coli, this protein is Dr hemagglutinin AFA-III operon regulatory protein AfaF (afaF).